The following is a 173-amino-acid chain: Photosystem I assembly protein Ycf3 (173 aa).

3 TPR repeats span residues 35–68 (AYVY…EENS), 72–105 (SETL…NPNQ), and 120–153 (GRIA…NPGG).

The protein belongs to the Ycf3 family.

The protein resides in the cellular thylakoid membrane. Functionally, essential for the assembly of the photosystem I (PSI) complex. May act as a chaperone-like factor to guide the assembly of the PSI subunits. The sequence is that of Photosystem I assembly protein Ycf3 from Synechococcus sp. (strain CC9605).